A 506-amino-acid polypeptide reads, in one-letter code: ATP synthase subunit alpha, plastid (506 aa).

170 to 177 (GDRQTGKT) serves as a coordination point for ATP.

The protein belongs to the ATPase alpha/beta chains family. As to quaternary structure, F-type ATPases have 2 components, CF(1) - the catalytic core - and CF(0) - the membrane proton channel. CF(1) has five subunits: alpha(3), beta(3), gamma(1), delta(1), epsilon(1). CF(0) has four main subunits: a, b, b' and c.

The protein localises to the plastid membrane. It catalyses the reaction ATP + H2O + 4 H(+)(in) = ADP + phosphate + 5 H(+)(out). Produces ATP from ADP in the presence of a proton gradient across the membrane. The alpha chain is a regulatory subunit. This chain is ATP synthase subunit alpha, plastid, found in Prototheca wickerhamii.